Reading from the N-terminus, the 698-residue chain is Elongation factor G (698 aa).

In terms of domain architecture, tr-type G spans 10–285; sequence AATRNIGIMA…AVVDFLPSPT (276 aa). Residues 19 to 26, 83 to 87, and 137 to 140 each bind GTP; these read AHIDAGKT, DTPGH, and NKMD.

Belongs to the TRAFAC class translation factor GTPase superfamily. Classic translation factor GTPase family. EF-G/EF-2 subfamily.

The protein resides in the cytoplasm. In terms of biological role, catalyzes the GTP-dependent ribosomal translocation step during translation elongation. During this step, the ribosome changes from the pre-translocational (PRE) to the post-translocational (POST) state as the newly formed A-site-bound peptidyl-tRNA and P-site-bound deacylated tRNA move to the P and E sites, respectively. Catalyzes the coordinated movement of the two tRNA molecules, the mRNA and conformational changes in the ribosome. This is Elongation factor G from Parafrankia sp. (strain EAN1pec).